The following is a 104-amino-acid chain: Iron-sulfur cluster assembly protein CyaY (104 aa).

This sequence belongs to the frataxin family.

Its function is as follows. Involved in iron-sulfur (Fe-S) cluster assembly. May act as a regulator of Fe-S biogenesis. The polypeptide is Iron-sulfur cluster assembly protein CyaY (Tolumonas auensis (strain DSM 9187 / NBRC 110442 / TA 4)).